Consider the following 158-residue polypeptide: 6,7-dimethyl-8-ribityllumazine synthase (158 aa).

5-amino-6-(D-ribitylamino)uracil contacts are provided by residues Phe23, Ser61–Glu63, and Ala85–Ile87. Residue Asp90–Thr91 participates in (2S)-2-hydroxy-3-oxobutyl phosphate binding. Residue His93 is the Proton donor of the active site. Tyr118 contacts 5-amino-6-(D-ribitylamino)uracil. Arg132 serves as a coordination point for (2S)-2-hydroxy-3-oxobutyl phosphate.

This sequence belongs to the DMRL synthase family.

The enzyme catalyses (2S)-2-hydroxy-3-oxobutyl phosphate + 5-amino-6-(D-ribitylamino)uracil = 6,7-dimethyl-8-(1-D-ribityl)lumazine + phosphate + 2 H2O + H(+). It functions in the pathway cofactor biosynthesis; riboflavin biosynthesis; riboflavin from 2-hydroxy-3-oxobutyl phosphate and 5-amino-6-(D-ribitylamino)uracil: step 1/2. Catalyzes the formation of 6,7-dimethyl-8-ribityllumazine by condensation of 5-amino-6-(D-ribitylamino)uracil with 3,4-dihydroxy-2-butanone 4-phosphate. This is the penultimate step in the biosynthesis of riboflavin. This is 6,7-dimethyl-8-ribityllumazine synthase from Prochlorococcus marinus (strain MIT 9211).